The sequence spans 257 residues: Snake venom serine protease CL5 (257 aa).

The first 18 residues, 1–18, serve as a signal peptide directing secretion; sequence MVLIRVLANLLILQLSYA. A propeptide spanning residues 19-24 is cleaved from the precursor; the sequence is QRSSEL. In terms of domain architecture, Peptidase S1 spans 25-248; that stretch reads VIGGDECNIN…HLDWIQSIIA (224 aa). 5 cysteine pairs are disulfide-bonded: Cys-31–Cys-162, Cys-49–Cys-65, Cys-141–Cys-209, Cys-173–Cys-188, and Cys-199–Cys-224. The Charge relay system role is filled by His-64. N-linked (GlcNAc...) asparagine glycosylation is found at Asn-78 and Asn-102. Catalysis depends on Asp-109, which acts as the Charge relay system. 2 N-linked (GlcNAc...) asparagine glycosylation sites follow: Asn-153 and Asn-169. Ser-203 acts as the Charge relay system in catalysis. The N-linked (GlcNAc...) asparagine glycan is linked to Asn-250.

The protein belongs to the peptidase S1 family. Snake venom subfamily. As to quaternary structure, monomer. In terms of tissue distribution, expressed by the venom gland.

It localises to the secreted. Its function is as follows. Snake venom serine protease that may act in the hemostasis system of the prey. This chain is Snake venom serine protease CL5, found in Trimeresurus stejnegeri (Chinese green tree viper).